Consider the following 222-residue polypeptide: MAAHTILASAPSHTTFSLISPFSSTPTNALSSSLQSSSFNGLSFKLSPTTQSLSLSTSAASKPLTIVAATKKAVAVLKGTSNVEGVVTLTQEDDGPTTVNVRISGLAPGKHGFHLHEFGDTTNGCMSTGPHFNPDKKTHGAPEDEVRHAGDLGNIVANTDGVAEATIVDNQIPLTGPNSVVGRALVVHELEDDLGKGGHELSPTTGNAGGRLACGVVGLTPV.

A chloroplast-targeting transit peptide spans 1 to 68 (MAAHTILASA…AASKPLTIVA (68 aa)). 3 residues coordinate Cu cation: H114, H116, and H131. A disulfide bridge links C125 with C214. Zn(2+) contacts are provided by H131, H139, H148, and D151. H188 is a binding site for Cu cation.

This sequence belongs to the Cu-Zn superoxide dismutase family. Homotetramer. The cofactor is Cu cation. Zn(2+) is required as a cofactor.

The protein resides in the plastid. Its subcellular location is the chloroplast. The catalysed reaction is 2 superoxide + 2 H(+) = H2O2 + O2. Its function is as follows. Destroys radicals which are normally produced within the cells and which are toxic to biological systems. In Spinacia oleracea (Spinach), this protein is Superoxide dismutase [Cu-Zn], chloroplastic (SODCP).